Consider the following 350-residue polypeptide: Glycogenin-1 (350 aa).

The residue at position 2 (T2) is an N-acetylthreonine. L9, T11, N12, and Y15 together coordinate UDP. Residues L9, T11, N12, and Y15 each coordinate UDP-alpha-D-glucose. The residue at position 44 (S44) is a Phosphoserine. Position 77 (R77) interacts with UDP. 10 residues coordinate UDP-alpha-D-glucose: R77, K86, D102, A103, D104, N133, S134, D160, D163, and Q164. Residues D102, A103, and D104 each coordinate UDP. A Mn(2+)-binding site is contributed by D102. D104 provides a ligand contact to Mn(2+). A glycan (O-linked (Glc...) tyrosine) is linked at Y195. UDP is bound by residues H212, G215, and K218. Residue H212 participates in Mn(2+) binding. UDP-alpha-D-glucose-binding residues include G215 and K218. The segment at 301–333 (SHLSLGEIPAMAQPFVSSEERKERWEQGQADYM) is interaction with GYS1.

This sequence belongs to the glycosyltransferase 8 family. Glycogenin subfamily. As to quaternary structure, part of the GYS1-GYG1 complex, a heterooctamer composed of a tetramer of GYS1 and 2 dimers of GYG1, where each GYS1 protomer binds to one GYG1 subunit (via GYG1 C-terminus); the GYS1 tetramer may dissociate from GYG1 dimers to continue glycogen polymerization on its own. May also form a heterooctamer complex with GYS2 (via GYG1 C-terminus). The cofactor is Mn(2+). Self-glycosylated by the transfer of glucose residues from UDP-glucose to itself, forming an alpha-1,4-glycan of around 10 residues attached to Tyr-195. In terms of processing, phosphorylated. As to expression, highly expressed in skeletal muscle and heart, with lower levels in brain, lung, kidney and pancreas.

The protein localises to the cytoplasm. Its subcellular location is the nucleus. The catalysed reaction is L-tyrosyl-[glycogenin] + UDP-alpha-D-glucose = alpha-D-glucosyl-L-tyrosyl-[glycogenin] + UDP + H(+). It catalyses the reaction [1,4-alpha-D-glucosyl](n)-L-tyrosyl-[glycogenin] + UDP-alpha-D-glucose = [1,4-alpha-D-glucosyl](n+1)-L-tyrosyl-[glycogenin] + UDP + H(+). It functions in the pathway glycan biosynthesis; glycogen biosynthesis. With respect to regulation, inhibited by palladium ions. Functionally, glycogenin participates in the glycogen biosynthetic process along with glycogen synthase and glycogen branching enzyme. It catalyzes the formation of a short alpha (1,4)-glucosyl chain covalently attached via a glucose 1-O-tyrosyl linkage to internal tyrosine residues and these chains act as primers for the elongation reaction catalyzed by glycogen synthase. This is Glycogenin-1 from Homo sapiens (Human).